Here is a 173-residue protein sequence, read N- to C-terminus: MAIILGVDPGSRITGYGVIQCQGRHQLYLGSGCIRTSSDELPDRLKQIFDGLQEIIRQYQPSQFAIERVFMAKNADSALKLGQARGAAIVAATVAGLPVAEYSATQIKNAVVGTGRAQKAQVQHMVQQMLKLPAAPQADAADALAVAMCHYHTHQSLVALGGRASVRTYGRYR.

Catalysis depends on residues aspartate 8, glutamate 67, and aspartate 139. Aspartate 8, glutamate 67, and aspartate 139 together coordinate Mg(2+).

It belongs to the RuvC family. As to quaternary structure, homodimer which binds Holliday junction (HJ) DNA. The HJ becomes 2-fold symmetrical on binding to RuvC with unstacked arms; it has a different conformation from HJ DNA in complex with RuvA. In the full resolvosome a probable DNA-RuvA(4)-RuvB(12)-RuvC(2) complex forms which resolves the HJ. Mg(2+) serves as cofactor.

The protein localises to the cytoplasm. The enzyme catalyses Endonucleolytic cleavage at a junction such as a reciprocal single-stranded crossover between two homologous DNA duplexes (Holliday junction).. Its function is as follows. The RuvA-RuvB-RuvC complex processes Holliday junction (HJ) DNA during genetic recombination and DNA repair. Endonuclease that resolves HJ intermediates. Cleaves cruciform DNA by making single-stranded nicks across the HJ at symmetrical positions within the homologous arms, yielding a 5'-phosphate and a 3'-hydroxyl group; requires a central core of homology in the junction. The consensus cleavage sequence is 5'-(A/T)TT(C/G)-3'. Cleavage occurs on the 3'-side of the TT dinucleotide at the point of strand exchange. HJ branch migration catalyzed by RuvA-RuvB allows RuvC to scan DNA until it finds its consensus sequence, where it cleaves and resolves the cruciform DNA. The sequence is that of Crossover junction endodeoxyribonuclease RuvC from Shewanella amazonensis (strain ATCC BAA-1098 / SB2B).